Here is a 2799-residue protein sequence, read N- to C-terminus: Peramine synthetase ppzA (2799 aa).

An adenylation 1 region spans residues 270–666 (QERCRLQPNA…VGRKDTQVKI (397 aa)). Positions 799 to 875 (QPLTGMERLL…DLSRQSRYIE (77 aa)) constitute a Carrier 1 domain. O-(pantetheine 4'-phosphoryl)serine is present on serine 836. Positions 914–1327 (DAYPCTPLQE…ITILTTEDLE (414 aa)) are condensation. Residues 1350 to 1743 (DKVQARPNAP…TLSFVRRKDT (394 aa)) are adenylation 2. Residues 1874–1970 (LEIGCGSGMM…EYLVKLIQDI (97 aa)) are methylation (Met) domain. The region spanning 2290–2368 (SPTTDMEKEL…RLLLDCCCDD (79 aa)) is the Carrier 2 domain. Serine 2327 bears the O-(pantetheine 4'-phosphoryl)serine mark. A thiesterase (TE) domain region spans residues 2420–2737 (TVLLTGANGF…LADMLQDLED (318 aa)).

This sequence belongs to the NRP synthetase family. The cofactor is pantetheine 4'-phosphate.

It carries out the reaction (S)-1-pyrroline-5-carboxylate + L-arginine + S-adenosyl-L-methionine + 2 ATP = peramine + 2 AMP + S-adenosyl-L-homocysteine + 2 diphosphate + H2O + 2 H(+). It functions in the pathway secondary metabolite biosynthesis. In terms of biological role, nonribosomal peptide synthetase; part of the gene cluster that mediates the biosynthesis of pyrrolopyrazines, secondary metabolites showing insecticidal activity. The single multifunctional NRPS ppzA is responsible for the biosynthesis of peramine. The condensation domain of ppzA is proposed to catalyze formation of a peptide bond between 1-pyrroline-5-carboxylate and arginine. The methylation domain of ppzA would catalyze the N-methylation of the alpha-amino group of arginine. The reductase domain is proposed to be responsible for reduction of the thioester and the cyclization to form an iminium ion resulting in release from the peptide synthetase. Deprotonation of this intermediate and oxidation of the pyrroline ring would give rise to peramine. This final oxidation to give the pyrrole functionality may be spontaneous. In Epichloe species that produce only peramine, the peramine synthetase gene is not localized in a gene cluster, in contrast to Metarhizium species that contain additional pyrrolopyrazine biosynthesis genes. The 2-oxoglutarate-Fe(II) type oxidoreductase ppzC hydroxylates peramine to yield the newly identified compound 8-hydroxyperamine whereas ppzD converts L-proline into trans-4-hydroxy-L-proline, a precursor of peramine biosynthesis. This Metarhizium majus (strain ARSEF 297) protein is Peramine synthetase ppzA.